A 284-amino-acid chain; its full sequence is NAD kinase (284 aa).

The active-site Proton acceptor is Asp60. NAD(+) is bound by residues 60–61 (DG), 134–135 (NE), Arg145, Lys162, Asp164, 175–180 (TAYSFS), and Gln234.

This sequence belongs to the NAD kinase family. The cofactor is a divalent metal cation.

It localises to the cytoplasm. The enzyme catalyses NAD(+) + ATP = ADP + NADP(+) + H(+). In terms of biological role, involved in the regulation of the intracellular balance of NAD and NADP, and is a key enzyme in the biosynthesis of NADP. Catalyzes specifically the phosphorylation on 2'-hydroxyl of the adenosine moiety of NAD to yield NADP. The protein is NAD kinase of Clostridium botulinum (strain Alaska E43 / Type E3).